The primary structure comprises 219 residues: Germin-like protein subfamily 2 member 1 (219 aa).

The signal sequence occupies residues Met-1–Ser-21. Residues Cys-32 and Cys-47 are joined by a disulfide bond. One can recognise a Cupin type-1 domain in the interval Gln-61 to Lys-209. Asn-70 carries an N-linked (GlcNAc...) asparagine glycan. Mn(2+) is bound by residues His-109, His-111, Glu-116, and His-155.

It belongs to the germin family. Oligomer (believed to be a pentamer but probably hexamer).

The protein localises to the secreted. It is found in the extracellular space. It localises to the apoplast. In terms of biological role, may play a role in plant defense. Probably has no oxalate oxidase activity even if the active site is conserved. In Arabidopsis thaliana (Mouse-ear cress), this protein is Germin-like protein subfamily 2 member 1 (GLP4).